A 201-amino-acid chain; its full sequence is Anthranilate synthase component II (201 aa).

The 194-residue stretch at 3–196 (DILLLDNIDS…LAWAQRKLEP (194 aa)) folds into the Glutamine amidotransferase type-1 domain. 57–59 (GPG) is an L-glutamine binding site. Cysteine 84 acts as the Nucleophile; for GATase activity in catalysis. L-glutamine-binding positions include glutamine 88 and 134-135 (SL). Active-site for GATase activity residues include histidine 170 and glutamate 172.

In terms of assembly, tetramer of two components I and two components II.

It carries out the reaction chorismate + L-glutamine = anthranilate + pyruvate + L-glutamate + H(+). It catalyses the reaction N-(5-phospho-beta-D-ribosyl)anthranilate + diphosphate = 5-phospho-alpha-D-ribose 1-diphosphate + anthranilate. It participates in amino-acid biosynthesis; L-tryptophan biosynthesis; L-tryptophan from chorismate: step 1/5. Its pathway is amino-acid biosynthesis; L-tryptophan biosynthesis; L-tryptophan from chorismate: step 2/5. The protein is Anthranilate synthase component II (trpG-TRPD) of Shigella dysenteriae.